A 256-amino-acid polypeptide reads, in one-letter code: Phosphate import ATP-binding protein PstB (256 aa).

The ABC transporter domain maps to 10 to 251; it reads IRTVNVNFYY…PEQKQTEDYI (242 aa). 42–49 provides a ligand contact to ATP; sequence GPSGCGKS.

It belongs to the ABC transporter superfamily. Phosphate importer (TC 3.A.1.7) family. The complex is composed of two ATP-binding proteins (PstB), two transmembrane proteins (PstC and PstA) and a solute-binding protein (PstS).

It is found in the cell inner membrane. It carries out the reaction phosphate(out) + ATP + H2O = ADP + 2 phosphate(in) + H(+). In terms of biological role, part of the ABC transporter complex PstSACB involved in phosphate import. Responsible for energy coupling to the transport system. The sequence is that of Phosphate import ATP-binding protein PstB from Syntrophus aciditrophicus (strain SB).